The primary structure comprises 171 residues: MAEKRNIFLVGPMGAGKSTIGRHLAQMLHLEFHDSDQEIESRTGADIAWVFDVEGEEGFRIRETQVVADLTEKQGIVLATGGGSIQSKEIRNNLSARGIVVYLETTIDKQVARTQRDKRRPLLQVEDPREVLENLAATRNPLYEEIADVIVKTDEQSAKVVANQIIEQLGF.

14–19 provides a ligand contact to ATP; that stretch reads GAGKST. S18 is a binding site for Mg(2+). Substrate is bound by residues D36, R60, and G82. R120 serves as a coordination point for ATP. Substrate is bound at residue R139. Q156 contributes to the ATP binding site.

The protein belongs to the shikimate kinase family. In terms of assembly, monomer. The cofactor is Mg(2+).

The protein resides in the cytoplasm. The catalysed reaction is shikimate + ATP = 3-phosphoshikimate + ADP + H(+). It participates in metabolic intermediate biosynthesis; chorismate biosynthesis; chorismate from D-erythrose 4-phosphate and phosphoenolpyruvate: step 5/7. Functionally, catalyzes the specific phosphorylation of the 3-hydroxyl group of shikimic acid using ATP as a cosubstrate. The protein is Shikimate kinase of Shewanella woodyi (strain ATCC 51908 / MS32).